A 261-amino-acid chain; its full sequence is Undecaprenyl-diphosphatase 2 (261 aa).

8 helical membrane passes run 1–21, 38–58, 75–95, 103–123, 138–158, 178–198, 212–232, and 240–260; these read MLEA…PISS, PGKT…CVVF, FAFA…GATL, LESP…ILVI, MSPA…VPGV, AAEF…AYSL, LIAL…KGFI, and FAPF…LILM.

Belongs to the UppP family.

It localises to the cell inner membrane. It carries out the reaction di-trans,octa-cis-undecaprenyl diphosphate + H2O = di-trans,octa-cis-undecaprenyl phosphate + phosphate + H(+). Catalyzes the dephosphorylation of undecaprenyl diphosphate (UPP). Confers resistance to bacitracin. The chain is Undecaprenyl-diphosphatase 2 from Paramagnetospirillum magneticum (strain ATCC 700264 / AMB-1) (Magnetospirillum magneticum).